The sequence spans 105 residues: Signal peptidase complex subunit 1 (105 aa).

At 1–32 (MDGMIAMLPAPLQKLSSHIDFQGQKVAERTYQ) the chain is on the cytoplasmic side. Residues 33-53 (VILTIAGIIGFLVGFWTQQLS) traverse the membrane as a helical segment. Topologically, residues 54-56 (YAM) are lumenal. The chain crosses the membrane as a helical span at residues 57-77 (FTVLGASAFTALIILPPWPFL). The Cytoplasmic portion of the chain corresponds to 78 to 105 (FRKNPIVWHTPAEPQESGDKKKETKKTK).

This sequence belongs to the SPCS1 family. As to quaternary structure, component of the signal peptidase complex (SPC) composed of a catalytic subunit sec-11 and three accessory subunits spcs-1, spcs-2 and spcs-3. The complex induces a local thinning of the ER membrane which is used to measure the length of the signal peptide (SP) h-region of protein substrates. This ensures the selectivity of the complex towards h-regions shorter than 18-20 amino acids.

The protein localises to the endoplasmic reticulum membrane. Component of the signal peptidase complex (SPC) which catalyzes the cleavage of N-terminal signal sequences from nascent proteins as they are translocated into the lumen of the endoplasmic reticulum. Dispensable for SPC enzymatic activity. This Caenorhabditis elegans protein is Signal peptidase complex subunit 1.